We begin with the raw amino-acid sequence, 101 residues long: Small ribosomal subunit protein uS14 (101 aa).

This sequence belongs to the universal ribosomal protein uS14 family. As to quaternary structure, part of the 30S ribosomal subunit. Contacts proteins S3 and S10.

Its function is as follows. Binds 16S rRNA, required for the assembly of 30S particles and may also be responsible for determining the conformation of the 16S rRNA at the A site. The sequence is that of Small ribosomal subunit protein uS14 from Chromohalobacter salexigens (strain ATCC BAA-138 / DSM 3043 / CIP 106854 / NCIMB 13768 / 1H11).